Consider the following 337-residue polypeptide: MRRGWKMALSGGLRCCRRVLSWVPVLVIVLVVLWSYYAYVFELCLVTVLSPAEKVIYLILYHAIFVFFTWTYWKSIFTLPQQPNQKFHLSYTDKERYENEERPEVQKQMLVDMAKKLPVYTRTGSGAVRFCDRCHLIKPDRCHHCSVCAMCVLKMDHHCPWVNNCIGFSNYKFFLQFLAYSVLYCLYIATTVFSYFIKYWRGELPSVRSKFHVLFLLFVACMFFVSLVILFGYHCWLVSRNKTTLEAFCTPVFTSGPEKNGFNLGFIKNIQQVFGDKKKFWLIPIGSSPGDGHSFPMRSMNESQNPLLANEETWEDNEDDNQDYPEGSSSLAVETET.

Residues 1-20 (MRRGWKMALSGGLRCCRRVL) are Cytoplasmic-facing. Residues 21 to 41 (SWVPVLVIVLVVLWSYYAYVF) form a helical membrane-spanning segment. Over 42–56 (ELCLVTVLSPAEKVI) the chain is Lumenal. The chain crosses the membrane as a helical span at residues 57–77 (YLILYHAIFVFFTWTYWKSIF). The Cytoplasmic segment spans residues 78 to 172 (TLPQQPNQKF…NNCIGFSNYK (95 aa)). Residues 129-179 (RFCDRCHLIKPDRCHHCSVCAMCVLKMDHHCPWVNNCIGFSNYKFFLQFLA) form the DHHC domain. Zn(2+) is bound by residues C131, C134, H144, C145, C148, C151, and H158. C159 functions as the S-palmitoyl cysteine intermediate in the catalytic mechanism. Residue C165 coordinates Zn(2+). A helical membrane pass occupies residues 173 to 193 (FFLQFLAYSVLYCLYIATTVF). Residues 194–210 (SYFIKYWRGELPSVRSK) are Lumenal-facing. A helical membrane pass occupies residues 211 to 234 (FHVLFLLFVACMFFVSLVILFGYH). Residues 235–337 (CWLVSRNKTT…SSSLAVETET (103 aa)) are Cytoplasmic-facing. The disordered stretch occupies residues 306–337 (PLLANEETWEDNEDDNQDYPEGSSSLAVETET). Over residues 312–323 (ETWEDNEDDNQD) the composition is skewed to acidic residues. Polar residues predominate over residues 327 to 337 (GSSSLAVETET).

It belongs to the DHHC palmitoyltransferase family. Autopalmitoylated (in vitro). In terms of tissue distribution, expressed in placenta, liver, lung, kidney, heart and brain.

The protein localises to the golgi apparatus membrane. Its subcellular location is the postsynaptic density. The enzyme catalyses L-cysteinyl-[protein] + hexadecanoyl-CoA = S-hexadecanoyl-L-cysteinyl-[protein] + CoA. It catalyses the reaction L-cysteinyl-[protein] + tetradecanoyl-CoA = S-tetradecanoyl-L-cysteinyl-[protein] + CoA. It carries out the reaction L-cysteinyl-[protein] + octadecanoyl-CoA = S-octadecanoyl-L-cysteinyl-[protein] + CoA. Its function is as follows. Palmitoyltransferase that catalyzes the addition of palmitate onto various protein substrates. Has no stringent fatty acid selectivity and in addition to palmitate can also transfer onto target proteins myristate from tetradecanoyl-CoA and stearate from octadecanoyl-CoA. Palmitoylates IGF2R and SORT1, promoting their partitioning to an endosomal membrane subdomain where they can interact with the retromer cargo-selective complex. Thereby, regulates retrograde transport from endosomes to the Golgi apparatus of these lysosomal sorting receptors and plays a role in trafficking of lysosomal proteins. In the nervous system, catalyzes the palmitoylation of DLG4/PSD95 and regulates its synaptic clustering and function in synaptogenesis. Could be involved in the differentiation of dopaminergic neurons and the development of the diencephalon. Could also catalyze the palmitoylation of GAP43. Could also palmitoylate DNAJC5 and regulate its localization to the Golgi membrane. Could also palmitoylate FYN as shown in vitro. May palmitoylate CALHM3 subunit of gustatory voltage-gated ion channels and modulate channel gating and kinetics. The chain is Palmitoyltransferase ZDHHC15 from Homo sapiens (Human).